Reading from the N-terminus, the 325-residue chain is Tetraacyldisaccharide 4'-kinase (325 aa).

An ATP-binding site is contributed by 55–62 (TAGGNGKT).

This sequence belongs to the LpxK family.

The catalysed reaction is a lipid A disaccharide + ATP = a lipid IVA + ADP + H(+). The protein operates within glycolipid biosynthesis; lipid IV(A) biosynthesis; lipid IV(A) from (3R)-3-hydroxytetradecanoyl-[acyl-carrier-protein] and UDP-N-acetyl-alpha-D-glucosamine: step 6/6. Transfers the gamma-phosphate of ATP to the 4'-position of a tetraacyldisaccharide 1-phosphate intermediate (termed DS-1-P) to form tetraacyldisaccharide 1,4'-bis-phosphate (lipid IVA). The protein is Tetraacyldisaccharide 4'-kinase of Salmonella enteritidis PT4 (strain P125109).